The chain runs to 247 residues: MPEKTIQEEIQTIIPELFPILEPEFDWELVKNFYDFLKRDNEKGGFFSKNDSEKILERHILESLIFVWKLKTTGYVSRETNVADVGTGPGLPGFLFAVLKKAPQVFLVDSQKRKLALLEAEITTGSLSKVKKRVEFIYARTEEISSNFDVVTSRAMVPYPYLAEVTTRMVKQKGILCPFLAQPYQDLEKETEVLSNNGFVLKKEILIPELEFVGKRHIKILQKNSLPKKGYPRDWKEIVKETKSKNG.

S-adenosyl-L-methionine contacts are provided by Gly-86, Leu-91, and Arg-154.

The protein belongs to the methyltransferase superfamily. RNA methyltransferase RsmG family.

The protein localises to the cytoplasm. Its function is as follows. Specifically methylates the N7 position of a guanine in 16S rRNA. This chain is Ribosomal RNA small subunit methyltransferase G, found in Leptospira biflexa serovar Patoc (strain Patoc 1 / Ames).